The primary structure comprises 113 residues: UPF0339 protein MS1092 (113 aa).

2 consecutive repeat copies span residues 11 to 59 and 62 to 110.

This sequence belongs to the UPF0339 family. Duplicated subfamily.

In Mannheimia succiniciproducens (strain KCTC 0769BP / MBEL55E), this protein is UPF0339 protein MS1092.